We begin with the raw amino-acid sequence, 487 residues long: UDP-N-acetylmuramate--L-alanine ligase (487 aa).

An ATP-binding site is contributed by G122–S128.

The protein belongs to the MurCDEF family.

The protein localises to the cytoplasm. It catalyses the reaction UDP-N-acetyl-alpha-D-muramate + L-alanine + ATP = UDP-N-acetyl-alpha-D-muramoyl-L-alanine + ADP + phosphate + H(+). The protein operates within cell wall biogenesis; peptidoglycan biosynthesis. Its function is as follows. Cell wall formation. This chain is UDP-N-acetylmuramate--L-alanine ligase, found in Corynebacterium urealyticum (strain ATCC 43042 / DSM 7109).